Reading from the N-terminus, the 399-residue chain is O-glucosyltransferase rumi homolog (399 aa).

The first 18 residues, 1-18 (MHFIIGIVICLSLSVIQS), serve as a signal peptide directing secretion. N-linked (GlcNAc...) asparagine glycosylation is found at Asn-19 and Asn-67. 4 disulfides stabilise this stretch: Cys-66-Cys-73, Cys-71-Cys-373, Cys-118-Cys-124, and Cys-277-Cys-300. The Proton donor/acceptor role is filled by Asp-149. The interaction with the consensus sequence C-X-S-X-[PA]-C in peptide substrates stretch occupies residues 189 to 194 (AIALYP). UDP-alpha-D-glucose-binding positions include 224–228 (RGSRT), Arg-232, 271–273 (VTL), and 289–293 (AASFR).

The protein belongs to the glycosyltransferase 90 family.

Its subcellular location is the endoplasmic reticulum lumen. The protein resides in the secreted. The protein operates within protein modification; protein glycosylation. Protein O-glucosyltransferase. Catalyzes the reaction that attaches glucose through an O-glycosidic linkage to a conserved serine residue found in the consensus sequence C-X-S-X-[PA]-C in epidermal growth factor-like repeats. Regulates Notch signaling by glucosylating Notch in the ER, glucosylation is required for the correct folding and cleavage of Notch. The polypeptide is O-glucosyltransferase rumi homolog (Anopheles gambiae (African malaria mosquito)).